A 162-amino-acid polypeptide reads, in one-letter code: Sorting nexin-3 (162 aa).

Residue Ala2 is modified to N-acetylalanine. The region spanning 27-151 (NFLEIDVSNP…HMFLQDEIID (125 aa)) is the PX domain. Arg43 is modified (omega-N-methylarginine). Positions 70, 72, 95, and 118 each coordinate a 1,2-diacyl-sn-glycero-3-phospho-(1D-myo-inositol-3-phosphate). The residue at position 72 (Ser72) is a Phosphoserine. Lys95 is covalently cross-linked (Glycyl lysine isopeptide (Lys-Gly) (interchain with G-Cter in SUMO2)). Residues 147 to 162 (DEIIDKSYTPSKIRHA) form a binds predominantly to PtdIns(P5) and weaker to PtdIns(P3) abd PtdIns(P4); involved in neurite outgrowth regulation region.

It belongs to the sorting nexin family. Interacts with VPS26A, VPS29 and VPS35; the interaction with VPS35 is direct. The association with the retromer CSC subcomplex subunits is proposed to represent a functional distinct retromer variant described as SNX3-retromer complex. Interacts with USP10 and SCNN1A. Interacts with TRFC. Interacts with SNX8; 2 molecules of SNX8 seems to associate with one molecule of SNX3. Interacts with PTPRU. Interacts with MON2 and DOP1B. Ubiquitinated, leading to its proteasomal degradation. Deubiquitinated by USP10.

The protein resides in the early endosome. It localises to the cytoplasmic vesicle. It is found in the phagosome. Phosphoinositide-binding protein required for multivesicular body formation. Specifically binds phosphatidylinositol 3-phosphate (PtdIns(P3)). Can also bind phosphatidylinositol 4-phosphate (PtdIns(P4)), phosphatidylinositol 5-phosphate (PtdIns(P5)) and phosphatidylinositol 3,5-biphosphate (PtdIns(3,5)P2). Plays a role in protein transport between cellular compartments. Together with RAB7A facilitates endosome membrane association of the retromer cargo-selective subcomplex (CSC/VPS). May in part act as component of the SNX3-retromer complex which mediates the retrograde endosome-to-TGN transport of WLS distinct from the SNX-BAR retromer pathway. Promotes stability and cell surface expression of epithelial sodium channel (ENAC) subunits SCNN1A and SCNN1G. Not involved in EGFR degradation. Involved in the regulation of phagocytosis in dendritic cells possibly by regulating EEA1 recruitment to the nascent phagosomes. Involved in iron homeostasis through regulation of endocytic recycling of the transferrin receptor TFRC presumably by delivering the transferrin:transferrin receptor complex to recycling endosomes; the function may involve the CSC retromer subcomplex. In the case of Salmonella enterica infection plays arole in maturation of the Salmonella-containing vacuole (SCV) and promotes recruitment of LAMP1 to SCVs. This chain is Sorting nexin-3, found in Homo sapiens (Human).